A 1264-amino-acid chain; its full sequence is Ubiquitin carboxyl-terminal hydrolase usp-48 (1264 aa).

One can recognise a USP domain in the interval 108-430 (AGLINGGNFC…ACYGLLYRRR (323 aa)). The active-site Nucleophile is Cys-117. His-366 (proton acceptor) is an active-site residue. Disordered stretches follow at residues 390-415 (IPKP…KEKY), 522-610 (AKGE…IMDT), and 630-679 (TVEV…PVSS). Composition is skewed to basic and acidic residues over residues 403–415 (KTEK…KEKY) and 532–543 (EASENEEKKKNE). A coiled-coil region spans residues 516–547 (AQEYEVAKGEKKKKKKEASENEEKKKNEEDEA). Over residues 565-575 (SEPSTSAAATE) the composition is skewed to low complexity. Composition is skewed to polar residues over residues 587–599 (ETPN…STQV) and 663–678 (NGTN…QPVS).

This sequence belongs to the peptidase C19 family. As to expression, broadly expressed. Expressed in germline.

It localises to the nucleus. Its subcellular location is the chromosome. It carries out the reaction Thiol-dependent hydrolysis of ester, thioester, amide, peptide and isopeptide bonds formed by the C-terminal Gly of ubiquitin (a 76-residue protein attached to proteins as an intracellular targeting signal).. Functionally, recognizes and hydrolyzes the peptide bond at the C-terminal Gly of ubiquitin. Involved in the processing of poly-ubiquitin precursors as well as that of ubiquitinated proteins. Required post-developmentally to restrict the plasticity of epidermal cells, probably by regulating gene expression. This Caenorhabditis elegans protein is Ubiquitin carboxyl-terminal hydrolase usp-48.